Here is a 62-residue protein sequence, read N- to C-terminus: Sec-independent protein translocase protein TatA (62 aa).

A helical transmembrane segment spans residues 1–21 (MFGIGIPELLVIFVLILLVFG).

Belongs to the TatA/E family. In terms of assembly, the Tat system comprises two distinct complexes: a TatABC complex, containing multiple copies of TatA, TatB and TatC subunits, and a separate TatA complex, containing only TatA subunits. Substrates initially bind to the TatABC complex, which probably triggers association of the separate TatA complex to form the active translocon.

Its subcellular location is the cell inner membrane. Functionally, part of the twin-arginine translocation (Tat) system that transports large folded proteins containing a characteristic twin-arginine motif in their signal peptide across membranes. TatA could form the protein-conducting channel of the Tat system. This is Sec-independent protein translocase protein TatA from Oleidesulfovibrio alaskensis (strain ATCC BAA-1058 / DSM 17464 / G20) (Desulfovibrio alaskensis).